Consider the following 555-residue polypeptide: Protein PLASTID TRANSCRIPTIONALLY ACTIVE 12, chloroplastic (555 aa).

The transit peptide at 1 to 58 directs the protein to the chloroplast; sequence MASCYNPWRLFPGMSTAVPAGPVTAPAHSRTCKSSKVFSALPHRRGLLFLGTRRARIK. 3 disordered regions span residues 80–100, 115–167, and 468–541; these read YFDS…SIPG, ARAP…EPDV, and SYNE…IDDS. Over residues 144-154 the composition is skewed to polar residues; it reads QVTSASGTEGA. 2 stretches are compositionally biased toward acidic residues: residues 471–480 and 490–502; these read EDSDDEDEDV and LEDE…DVAE. Over residues 508–519 the composition is skewed to polar residues; it reads NQNWSALKSTGQ. Residues 521–538 show a composition bias toward basic and acidic residues; it reads EKPKEKSKKDEMTLKEAI.

In terms of assembly, component of the plastid-encoded plastid RNA polymerase (PEP) complex.

Its subcellular location is the plastid. It is found in the chloroplast stroma. The protein localises to the nucleus. Required for the activity of the plastid-encoded RNA polymerase (PEP) and full expression of genes transcribed by PEP. Required for the proper build-up and formation of the PEP-complex. Binds single-stranded (ss) DNA and RNA, but not double-stranded (ds) DNA. The sequence is that of Protein PLASTID TRANSCRIPTIONALLY ACTIVE 12, chloroplastic from Zea mays (Maize).